The chain runs to 237 residues: NAD-dependent protein deacetylase (237 aa).

One can recognise a Deacetylase sirtuin-type domain in the interval M1–E237. NAD(+) is bound by residues A25, T29, R37, Q100, I102, D103, and H118. 2 residues coordinate nicotinamide: I102 and D103. Catalysis depends on H118, which acts as the Proton acceptor. C126, C129, H144, and C147 together coordinate Zn(2+). Residues T185, S186, and N209 each contribute to the NAD(+) site.

Belongs to the sirtuin family. Class U subfamily.

It localises to the cytoplasm. The enzyme catalyses N(6)-acetyl-L-lysyl-[protein] + NAD(+) + H2O = 2''-O-acetyl-ADP-D-ribose + nicotinamide + L-lysyl-[protein]. Functionally, NAD-dependent protein deacetylase which modulates the activities of several enzymes which are inactive in their acetylated form. This Enterococcus faecalis (strain ATCC 700802 / V583) protein is NAD-dependent protein deacetylase.